We begin with the raw amino-acid sequence, 265 residues long: NAD kinase (265 aa).

Asp45 serves as the catalytic Proton acceptor. NAD(+) contacts are provided by residues 45–46 (DG), 121–122 (NE), Arg147, Asp149, Ala184, and Gln221.

It belongs to the NAD kinase family. A divalent metal cation serves as cofactor.

The protein resides in the cytoplasm. The catalysed reaction is NAD(+) + ATP = ADP + NADP(+) + H(+). Its function is as follows. Involved in the regulation of the intracellular balance of NAD and NADP, and is a key enzyme in the biosynthesis of NADP. Catalyzes specifically the phosphorylation on 2'-hydroxyl of the adenosine moiety of NAD to yield NADP. The polypeptide is NAD kinase (Leuconostoc citreum (strain KM20)).